A 141-amino-acid chain; its full sequence is MPGLFAAKKLKKNRQNFKWKDVDYKRKALRLDVKADPLEGAPQARGIVIEKVGIEAKQPNSAIRKCVRVQLIKNGKQLTAFAPGDGAIGFIDEHDEVMIEGIGGPSGRSMGDIPGVRWKVSKVNNVALSEMVSGKIEKPVR.

This sequence belongs to the universal ribosomal protein uS12 family. As to quaternary structure, part of the 30S ribosomal subunit.

In terms of biological role, with S4 and S5 plays an important role in translational accuracy. Located at the interface of the 30S and 50S subunits. This is Small ribosomal subunit protein uS12 from Methanobrevibacter smithii (strain ATCC 35061 / DSM 861 / OCM 144 / PS).